The following is a 744-amino-acid chain: Catalase-peroxidase (744 aa).

A signal peptide spans 1–22; sequence MSPRARRCTDRCARMSERSMNA. A cross-link (tryptophyl-tyrosyl-methioninium (Trp-Tyr) (with M-260)) is located at residues 114-234; it reads WHSAGTYRLA…LGATEMGLIY (121 aa). Catalysis depends on histidine 115, which acts as the Proton acceptor. The tryptophyl-tyrosyl-methioninium (Tyr-Met) (with W-114) cross-link spans 234-260; that stretch reads YVNPEGPDRNGDPISAAKFIRETFARM. A heme b-binding site is contributed by histidine 275.

The protein belongs to the peroxidase family. Peroxidase/catalase subfamily. As to quaternary structure, homodimer or homotetramer. Heme b is required as a cofactor. Formation of the three residue Trp-Tyr-Met cross-link is important for the catalase, but not the peroxidase activity of the enzyme.

The enzyme catalyses H2O2 + AH2 = A + 2 H2O. The catalysed reaction is 2 H2O2 = O2 + 2 H2O. Bifunctional enzyme with both catalase and broad-spectrum peroxidase activity. This is Catalase-peroxidase from Azorhizobium caulinodans (strain ATCC 43989 / DSM 5975 / JCM 20966 / LMG 6465 / NBRC 14845 / NCIMB 13405 / ORS 571).